Reading from the N-terminus, the 648-residue chain is Beta-glucuronidase (648 aa).

The first 22 residues, 1–22 (MSLKWSACWVALGQLLCSCALA), serve as a signal peptide directing secretion. N172 and N416 each carry an N-linked (GlcNAc...) asparagine glycan. E447 acts as the Proton donor in catalysis. Residue N627 is glycosylated (N-linked (GlcNAc...) asparagine).

This sequence belongs to the glycosyl hydrolase 2 family. Homotetramer.

It localises to the lysosome. It is found in the endoplasmic reticulum. It catalyses the reaction a beta-D-glucuronoside + H2O = D-glucuronate + an alcohol. Inhibited by L-aspartic acid. Its function is as follows. Plays an important role in the degradation of dermatan and keratan sulfates. The protein is Beta-glucuronidase (Gusb) of Mus musculus (Mouse).